We begin with the raw amino-acid sequence, 292 residues long: Protoheme IX farnesyltransferase (292 aa).

A run of 9 helical transmembrane segments spans residues 13–33 (ILFG…QGSI), 35–55 (ILLL…GCVV), 84–104 (VALV…WFGV), 106–126 (GYAF…YSLW), 135–155 (TVIG…AVTH), 161–181 (ALLL…AIAI), 206–226 (IECV…YCFG), 231–251 (FFLI…IIGF), and 263–283 (FFLY…FTYQ).

This sequence belongs to the UbiA prenyltransferase family. Protoheme IX farnesyltransferase subfamily.

The protein localises to the cell inner membrane. It carries out the reaction heme b + (2E,6E)-farnesyl diphosphate + H2O = Fe(II)-heme o + diphosphate. It functions in the pathway porphyrin-containing compound metabolism; heme O biosynthesis; heme O from protoheme: step 1/1. Its function is as follows. Converts heme B (protoheme IX) to heme O by substitution of the vinyl group on carbon 2 of heme B porphyrin ring with a hydroxyethyl farnesyl side group. This Acinetobacter baumannii (strain AB307-0294) protein is Protoheme IX farnesyltransferase.